The chain runs to 143 residues: Peptide methionine sulfoxide reductase B8 (143 aa).

Residues 18 to 139 (DEEWRAVLSP…NSVSLKFASA (122 aa)) enclose the MsrB domain. Residues cysteine 57, cysteine 60, cysteine 103, and cysteine 106 each contribute to the Zn(2+) site. Cysteine 75 and cysteine 128 form a disulfide bridge. The active-site Nucleophile is the cysteine 128.

This sequence belongs to the MsrB Met sulfoxide reductase family. It depends on Zn(2+) as a cofactor.

The protein resides in the cytoplasm. It localises to the cytosol. The enzyme catalyses L-methionyl-[protein] + [thioredoxin]-disulfide + H2O = L-methionyl-(R)-S-oxide-[protein] + [thioredoxin]-dithiol. Catalyzes the reduction of methionine sulfoxide (MetSO) to methionine in proteins. Plays a protective role against oxidative stress by restoring activity to proteins that have been inactivated by methionine oxidation. MSRB family specifically reduces the MetSO R-enantiomer. This is Peptide methionine sulfoxide reductase B8 (MSRB8) from Arabidopsis thaliana (Mouse-ear cress).